A 389-amino-acid chain; its full sequence is Homoserine O-acetyltransferase (389 aa).

A disordered region spans residues 1–21 (MAALRAGKTNNEADQPSSPVL). The segment covering 8–18 (KTNNEADQPSS) has biased composition (polar residues). The AB hydrolase-1 domain maps to 56 to 366 (NAILVCHALT…DRGHDAFLLD (311 aa)). The active-site Nucleophile is the Ser161. Arg231 is a binding site for substrate. Residues Asp327 and His360 contribute to the active site. Asp361 contributes to the substrate binding site.

It belongs to the AB hydrolase superfamily. MetX family. In terms of assembly, homodimer.

The protein resides in the cytoplasm. The catalysed reaction is L-homoserine + acetyl-CoA = O-acetyl-L-homoserine + CoA. It participates in amino-acid biosynthesis; L-methionine biosynthesis via de novo pathway; O-acetyl-L-homoserine from L-homoserine: step 1/1. In terms of biological role, transfers an acetyl group from acetyl-CoA to L-homoserine, forming acetyl-L-homoserine. The polypeptide is Homoserine O-acetyltransferase (Mesorhizobium japonicum (strain LMG 29417 / CECT 9101 / MAFF 303099) (Mesorhizobium loti (strain MAFF 303099))).